The primary structure comprises 174 residues: MTTIVSVRRNNQVVIAGDGQVSLGNTVMKGNAKKVRRLYHNKVLAGFAGGTADAFTLFERFESKLEMHQGHLLRSAVELAKDWRTDRMLRKLEAMLVVADAEASLIITGNGDVVQPEHDLVAIGSGGNYAQAAALALLQNTELSALEIAEKSLTIAGDICVFTNQFKTIEELNY.

The active site involves Thr2. Na(+) is bound by residues Gly157, Cys160, and Thr163.

Belongs to the peptidase T1B family. HslV subfamily. A double ring-shaped homohexamer of HslV is capped on each side by a ring-shaped HslU homohexamer. The assembly of the HslU/HslV complex is dependent on binding of ATP.

The protein localises to the cytoplasm. It catalyses the reaction ATP-dependent cleavage of peptide bonds with broad specificity.. Allosterically activated by HslU binding. Protease subunit of a proteasome-like degradation complex believed to be a general protein degrading machinery. The sequence is that of ATP-dependent protease subunit HslV from Shewanella oneidensis (strain ATCC 700550 / JCM 31522 / CIP 106686 / LMG 19005 / NCIMB 14063 / MR-1).